Here is a 666-residue protein sequence, read N- to C-terminus: UvrABC system protein B (666 aa).

Residues 26-414 (DSFQKGEKKV…KVVEQIIRPT (389 aa)) form the Helicase ATP-binding domain. 39–46 (GVTGSGKT) contributes to the ATP binding site. The Beta-hairpin signature appears at 92–115 (YYDYYQPEAYVPSSDTFIEKDSSI). Residues 429–591 (QIEDLLVEIR…ITPLTIKKEV (163 aa)) enclose the Helicase C-terminal domain. The 36-residue stretch at 625–660 (EVLKEKLREEMMKAAKELDFERAAILRDKMLSIQTE) folds into the UVR domain.

The protein belongs to the UvrB family. Forms a heterotetramer with UvrA during the search for lesions. Interacts with UvrC in an incision complex.

It localises to the cytoplasm. Functionally, the UvrABC repair system catalyzes the recognition and processing of DNA lesions. A damage recognition complex composed of 2 UvrA and 2 UvrB subunits scans DNA for abnormalities. Upon binding of the UvrA(2)B(2) complex to a putative damaged site, the DNA wraps around one UvrB monomer. DNA wrap is dependent on ATP binding by UvrB and probably causes local melting of the DNA helix, facilitating insertion of UvrB beta-hairpin between the DNA strands. Then UvrB probes one DNA strand for the presence of a lesion. If a lesion is found the UvrA subunits dissociate and the UvrB-DNA preincision complex is formed. This complex is subsequently bound by UvrC and the second UvrB is released. If no lesion is found, the DNA wraps around the other UvrB subunit that will check the other stand for damage. This is UvrABC system protein B from Leptospira interrogans serogroup Icterohaemorrhagiae serovar copenhageni (strain Fiocruz L1-130).